Reading from the N-terminus, the 73-residue chain is UPF0352 protein APJL_0577 (73 aa).

The protein belongs to the UPF0352 family.

The polypeptide is UPF0352 protein APJL_0577 (Actinobacillus pleuropneumoniae serotype 3 (strain JL03)).